The following is a 107-amino-acid chain: Integration host factor subunit alpha (107 aa).

The protein belongs to the bacterial histone-like protein family. As to quaternary structure, heterodimer of an alpha and a beta chain.

In terms of biological role, this protein is one of the two subunits of integration host factor, a specific DNA-binding protein that functions in genetic recombination as well as in transcriptional and translational control. The polypeptide is Integration host factor subunit alpha (Brucella abortus (strain S19)).